A 65-amino-acid chain; its full sequence is Large ribosomal subunit protein bL35 (65 aa).

The tract at residues 1–29 (MPKMKTHSGAKKRFKLTGSGKVKRQQANR) is disordered.

The protein belongs to the bacterial ribosomal protein bL35 family.

The sequence is that of Large ribosomal subunit protein bL35 from Kocuria rhizophila (strain ATCC 9341 / DSM 348 / NBRC 103217 / DC2201).